A 447-amino-acid chain; its full sequence is tRNA modification GTPase MnmE (447 aa).

Residues Arg-24, Glu-81, and Lys-120 each coordinate (6S)-5-formyl-5,6,7,8-tetrahydrofolate. The TrmE-type G domain maps to 216–371 (GLNVAIAGKP…LRKELSNISG (156 aa)). Asn-226 provides a ligand contact to K(+). Residues 226–231 (NAGKSS), 245–251 (TDIAGTT), and 270–273 (DTAG) contribute to the GTP site. Residue Ser-230 participates in Mg(2+) binding. K(+) contacts are provided by Thr-245, Ile-247, and Thr-250. Thr-251 is a binding site for Mg(2+). Lys-447 lines the (6S)-5-formyl-5,6,7,8-tetrahydrofolate pocket.

It belongs to the TRAFAC class TrmE-Era-EngA-EngB-Septin-like GTPase superfamily. TrmE GTPase family. As to quaternary structure, homodimer. Heterotetramer of two MnmE and two MnmG subunits. K(+) serves as cofactor.

Its subcellular location is the cytoplasm. Functionally, exhibits a very high intrinsic GTPase hydrolysis rate. Involved in the addition of a carboxymethylaminomethyl (cmnm) group at the wobble position (U34) of certain tRNAs, forming tRNA-cmnm(5)s(2)U34. The protein is tRNA modification GTPase MnmE of Vesicomyosocius okutanii subsp. Calyptogena okutanii (strain HA).